Consider the following 38-residue polypeptide: uncharacterized protein (38 aa).

The chain crosses the membrane as a helical span at residues 10–32 (FSLLWYFLVGGGKGEVCWRFLGI).

It localises to the membrane. This is an uncharacterized protein from Saccharomyces cerevisiae (strain ATCC 204508 / S288c) (Baker's yeast).